Reading from the N-terminus, the 194-residue chain is MASKGPTTSASTKSSSTGGTSGSSSSNGAGDNTNQDNTFECNICLDTAKDAVISLCGHLFCWPCLHQWLETRPNRQVCPVCKAGISRDKVIPLYGRGSTGQQDPREKTPPRPQGQRPEPENRGGFQGFGFGDGGFQMSFGIGAFPFGIFATAFNINDGRPPPAVPGTPQYVDEQFLSRLFLFVALVIMFWLLIA.

Residues 1–32 form a disordered region; the sequence is MASKGPTTSASTKSSSTGGTSGSSSSNGAGDN. The required for ubiquitin ligase activity and protection against ER stress-induced cell death stretch occupies residues 31–82; it reads DNTNQDNTFECNICLDTAKDAVISLCGHLFCWPCLHQWLETRPNRQVCPVCK. The RING-type zinc finger occupies 41–82; that stretch reads CNICLDTAKDAVISLCGHLFCWPCLHQWLETRPNRQVCPVCK. Residues 92 to 125 are disordered; the sequence is PLYGRGSTGQQDPREKTPPRPQGQRPEPENRGGF. Helical transmembrane passes span 133-153 and 174-194; these read GGFQ…ATAF and QFLS…LLIA.

It is found in the mitochondrion outer membrane. Its subcellular location is the endoplasmic reticulum membrane. It carries out the reaction S-ubiquitinyl-[E2 ubiquitin-conjugating enzyme]-L-cysteine + [acceptor protein]-L-lysine = [E2 ubiquitin-conjugating enzyme]-L-cysteine + N(6)-ubiquitinyl-[acceptor protein]-L-lysine.. It functions in the pathway protein modification; protein ubiquitination. In terms of biological role, E3 ubiquitin-protein ligase that regulates selective mitochondrial autophagy by mediating 'Lys-63'-linked polyubiquitination. Acts in the endoplasmic reticulum (ER)-associated degradation (ERAD) pathway, which targets misfolded proteins that accumulate in the endoplasmic reticulum (ER) for ubiquitination and subsequent proteasome-mediated degradation. Protects cells from ER stress-induced apoptosis. Responsible for the cotranslational ubiquitination and degradation of CFTR in the ERAD pathway. Also acts as a regulator of the innate antiviral response by catalyzing 'Lys-27'-linked polyubiquitination of CGAS, thereby promoting CGAS cyclic GMP-AMP synthase activity. Preferentially associates with the E2 enzymes UBE2J1 and UBE2J2. The protein is E3 ubiquitin-protein ligase RNF185 (RNF185) of Gallus gallus (Chicken).